Reading from the N-terminus, the 504-residue chain is Cytochrome P450 2K1 (504 aa).

Cysteine 447 is a binding site for heme.

It belongs to the cytochrome P450 family. Heme serves as cofactor.

The protein localises to the endoplasmic reticulum membrane. It localises to the microsome membrane. It catalyses the reaction an organic molecule + reduced [NADPH--hemoprotein reductase] + O2 = an alcohol + oxidized [NADPH--hemoprotein reductase] + H2O + H(+). The protein is Cytochrome P450 2K1 (cyp2k1) of Oncorhynchus mykiss (Rainbow trout).